Here is a 561-residue protein sequence, read N- to C-terminus: Transmembrane protein 151B (561 aa).

Residues Met1–Glu10 are compositionally biased toward low complexity. The segment at Met1–Pro42 is disordered. The segment covering Ser11–Gly22 has biased composition (gly residues). A run of 2 helical transmembrane segments spans residues Cys59–Thr79 and Tyr106–Trp126. Residues Val489–Met507 show a composition bias toward polar residues. A disordered region spans residues Val489–Pro523. A compositionally biased stretch (acidic residues) spans Asn510 to Ala519.

The protein belongs to the TMEM151 family.

Its subcellular location is the membrane. This Mus musculus (Mouse) protein is Transmembrane protein 151B (Tmem151b).